The chain runs to 96 residues: (4S)-4-hydroxy-5-phosphonooxypentane-2,3-dione isomerase (96 aa).

In terms of domain architecture, ABM spans 2–91 (HVTLVEINVH…MTGPRTKKVF (90 aa)).

The protein belongs to the LsrG family. Homodimer.

Its subcellular location is the cytoplasm. It catalyses the reaction (2S)-2-hydroxy-3,4-dioxopentyl phosphate = 3-hydroxy-2,4-dioxopentyl phosphate. Functionally, involved in the degradation of phospho-AI-2, thereby terminating induction of the lsr operon and closing the AI-2 signaling cycle. Catalyzes the conversion of (4S)-4-hydroxy-5-phosphonooxypentane-2,3-dione (P-DPD) to 3-hydroxy-5-phosphonooxypentane-2,4-dione (P-HPD). The chain is (4S)-4-hydroxy-5-phosphonooxypentane-2,3-dione isomerase from Salmonella choleraesuis (strain SC-B67).